A 101-amino-acid polypeptide reads, in one-letter code: Small ribosomal subunit protein bS18c (101 aa).

It belongs to the bacterial ribosomal protein bS18 family. In terms of assembly, part of the 30S ribosomal subunit.

The protein resides in the plastid. The protein localises to the chloroplast. The protein is Small ribosomal subunit protein bS18c of Vitis vinifera (Grape).